Here is a 534-residue protein sequence, read N- to C-terminus: Glucans biosynthesis protein D (534 aa).

The tat-type signal signal peptide spans 1–30 (MRMQRRHLLKNAAAALAALGLPALPQWALA).

It belongs to the OpgD/OpgG family. Predicted to be exported by the Tat system. The position of the signal peptide cleavage has not been experimentally proven.

The protein resides in the periplasm. It participates in glycan metabolism; osmoregulated periplasmic glucan (OPG) biosynthesis. Its function is as follows. Probably involved in the control of the structural glucose backbone of osmoregulated periplasmic glucans (OPGs). The sequence is that of Glucans biosynthesis protein D from Xanthomonas oryzae pv. oryzae (strain KACC10331 / KXO85).